The following is a 461-amino-acid chain: Bacterial E1-like protein BilD (461 aa).

The Glycyl thioester intermediate role is filled by C385.

In terms of biological role, component of the Bil (bacterial ISG15-like) antiviral defense system, composed of BilA, BilB, BilC and BilD. The Bil system specifically conjugates a ubiquitin-like moiety (bilA) to the bacteriophage central tail fiber (CTF, or tip attachment protein J) via reactions involving E1 (bilD) and E2 (bilB). Modifies CTF of phage SECphi27 and SECphi4, which probably interferes with assembly of the phage tail. Also modifies T5 baseplate hub protein pb3 (gene D16), but not gp27 of phage T6 (Bil defends against T6). BilD (E1) catalyzes the first step in conjugation. Activates ubiquitin-like BilA by first adenylating its C-terminal glycine residue with ATP, and then conjugates it to the side chain of a cysteine residue in E1 (this protein), yielding a ubiquitin-E1 thioester and free AMP. Bil-encoding bacteria produce mostly defective phage SECphi27, many of which have phage assembly defects, including no tails. SECphi27 phage progeny produced in E.coli with the Bil system inject less DNA into naive host cells, maybe because the phage are less able to adsorb and inject their DNA into host cells. Expression of the Bil system in E.coli (strain MG1655) confers about 100-fold resistance to phage SECphi27, SECphi18, SECphi6, SECphi4 and T5, but not to SECphi17. When cells expressing the Bil system are infected by phage SECphi27 at low multiplicity of infection (0.03 MOI) the culture survives, at 3.0 MOI the culture collapses at the same time as cells without the Bil system. The sequence is that of Bacterial E1-like protein BilD from Collimonas sp. (strain OK412).